A 711-amino-acid polypeptide reads, in one-letter code: Polyribonucleotide nucleotidyltransferase (711 aa).

Residues Asp-489 and Asp-495 each coordinate Mg(2+). The region spanning 556 to 615 (PRIHTIKISPDKIKDVIGKGGSVIRALTEETGTTIEIEDDGTVKIAATDGEKAKHAIRRI) is the KH domain. Positions 625–693 (GRIYNGKVTR…RQGRVRLSIK (69 aa)) constitute an S1 motif domain.

It belongs to the polyribonucleotide nucleotidyltransferase family. Component of the RNA degradosome, which is a multiprotein complex involved in RNA processing and mRNA degradation. Requires Mg(2+) as cofactor.

The protein resides in the cytoplasm. The catalysed reaction is RNA(n+1) + phosphate = RNA(n) + a ribonucleoside 5'-diphosphate. Its function is as follows. Involved in mRNA degradation. Catalyzes the phosphorolysis of single-stranded polyribonucleotides processively in the 3'- to 5'-direction. This is Polyribonucleotide nucleotidyltransferase from Cronobacter sakazakii (strain ATCC BAA-894) (Enterobacter sakazakii).